A 960-amino-acid polypeptide reads, in one-letter code: Chromo domain-containing protein 1 (960 aa).

The Chromo domain maps to 22–74 (YEVEDILADRVNKNGINEYYIKWAGYDWYDNTWEPEQNLFGAEKVLKKWKKRK).

As to quaternary structure, ago1, chp1 and tas3 interact to form the core of the RNA-induced transcriptional silencing (RITS) complex. The RITS complex interacts with the RDRC complex via interaction between ago1 and hrr1. Clr4 has a role in mediating this interaction. Interacts with dri1.

The protein localises to the nucleus. Its subcellular location is the cytoplasm. It is found in the cytoskeleton. It localises to the microtubule organizing center. The protein resides in the spindle pole body. Its function is as follows. Component of the kinetochore which plays a role in stabilizing microtubules and so allowing accurate chromosome segregation. Has a role in the RNA interference (RNAi) pathway which is important for heterochromatin formation and accurate chromosome segregation. A member of the RNA-induced transcriptional silencing (RITS) complex which is involved in the biosynthesis of dsRNA from primer siRNAs provided by the RNA-directed RNA polymerase (RDRC) complex. The sequence is that of Chromo domain-containing protein 1 from Schizosaccharomyces pombe (strain 972 / ATCC 24843) (Fission yeast).